We begin with the raw amino-acid sequence, 893 residues long: Serine/threonine-protein kinase/endoribonuclease IRE1 (893 aa).

Residues 1–19 (MRSLRRVLLQLVLLAGVAF) form the signal peptide. Topologically, residues 20-379 (RGVRFDDAAD…NSVTKFSYRW (360 aa)) are lumenal. N-linked (GlcNAc...) asparagine glycans are attached at residues N105, N158, N259, and N351. A helical membrane pass occupies residues 380–397 (LFPTFLMLLIMACLVKLA). The Cytoplasmic segment spans residues 398–893 (DASKYCRQFV…FSKYFLGSSA (496 aa)). The tract at residues 451–478 (ASDKEGNGTGGSTEAQSNKAHDSTNVEL) is disordered. Residues 491-759 (CVYSKEIGKG…AVYVMHHPFF (269 aa)) form the Protein kinase domain. Residues 497 to 505 (IGKGSNGTV) and K519 each bind ATP. D625 (proton acceptor) is an active-site residue. Residues 762–890 (PELCLSFLRD…EEAFSKYFLG (129 aa)) form the KEN domain.

This sequence belongs to the protein kinase superfamily. Ser/Thr protein kinase family. Homodimer; disulfide-linked. Dimer formation is driven by hydrophobic interactions within the N-terminal luminal domains and stabilized by disulfide bridges. Autophosphorylated. As to expression, expressed in roots, nodes, internodes, leaf sheaths, leaf blades, young ears and mature ears.

It is found in the endoplasmic reticulum membrane. It catalyses the reaction L-seryl-[protein] + ATP = O-phospho-L-seryl-[protein] + ADP + H(+). It carries out the reaction L-threonyl-[protein] + ATP = O-phospho-L-threonyl-[protein] + ADP + H(+). Its function is as follows. Involved in endoplasmic reticulum (ER) stress response. Senses unfolded proteins in the lumen of the ER via its N-terminal domain which leads to enzyme auto-activation. The active endoribonuclease domain splices bZIP50 mRNA to generate a new C-terminus, converting it into a potent unfolded-protein response (UPR) transcriptional activator, which then induces transcription of UPR target genes, such as luminal-binding protein (BiP) chaperones. The sequence is that of Serine/threonine-protein kinase/endoribonuclease IRE1 from Oryza sativa subsp. japonica (Rice).